Reading from the N-terminus, the 812-residue chain is Leucine-rich repeat-containing protein 41 (812 aa).

The interval 45–54 is interaction with Elongin BC complex; the sequence is ALFELCGRAV. Phosphoserine is present on residues S155, S276, and S326. The interval 267–408 is disordered; that stretch reads GEASRGRAPS…GARTRQGPGA (142 aa). Position 327 is a phosphothreonine (T327). The segment covering 354 to 381 has biased composition (low complexity); the sequence is TKRSPSAPAATSSASSSTSSYKRAPASS. S357 and S373 each carry phosphoserine. Residues 387–401 show a composition bias toward basic residues; it reads PLKRFKRAAGKKGAR. LRR repeat units lie at residues 487 to 507, 518 to 530, 531 to 555, 613 to 635, 636 to 659, 701 to 728, and 731 to 752; these read WVSLESLTLSYNGLGSNIFRL, AGCRLRALHLSDL, FSPLPILELTRAIVRALPLLRVLSI, SGSLQQLSLDSATFASPQDFGLV, LQTLKEYNLALKRLSFHDMNLADC, NSTLKGLRLPGNRLGNAGLLALADVFSE, and SSSLCQLDISSNCIKPDGLLEF.

In terms of assembly, part of an E3 ubiquitin-protein ligase complex with Elongin BC (ELOB and ELOC), RBX1 and CUL5. Component of a probable ECS(LRRC41) complex which contains CUL5, RNF7/RBX2, Elongin BC and LRRC41. Interacts with CUL5, RNF7, ELOB and ELOC.

The protein operates within protein modification; protein ubiquitination. Probable substrate recognition component of an ECS (Elongin BC-CUL2/5-SOCS-box protein) E3 ubiquitin ligase complex which mediates the ubiquitination and subsequent proteasomal degradation of target proteins. The chain is Leucine-rich repeat-containing protein 41 (LRRC41) from Homo sapiens (Human).